The sequence spans 49 residues: GQFLEDPSVLTKEKLKSELVANNVTLPAGEQRKDVYVELYLQHLTALKR.

The region spanning 4-47 is the LEM-like domain; that stretch reads LEDPSVLTKEKLKSELVANNVTLPAGEQRKDVYVELYLQHLTAL. The interval 32–36 is biological activity; the sequence is RKDVY.

The protein belongs to the thymopoietin family.

Functionally, hormone of the thymus with pleiotropic actions on prothymocytes, mature T-cells, the nicotinic acetylcholine receptor, and pituitary corticotrophs. The protein is Thymopoietin-1 of Bos taurus (Bovine).